The following is a 231-amino-acid chain: Ribosomal RNA small subunit methyltransferase G (231 aa).

Residues Gly85, Phe90, and Arg154 each coordinate S-adenosyl-L-methionine.

Belongs to the methyltransferase superfamily. RNA methyltransferase RsmG family.

It is found in the cytoplasm. It catalyses the reaction guanosine(527) in 16S rRNA + S-adenosyl-L-methionine = N(7)-methylguanosine(527) in 16S rRNA + S-adenosyl-L-homocysteine. Its function is as follows. Specifically methylates the N7 position of guanine in position 527 of 16S rRNA. The polypeptide is Ribosomal RNA small subunit methyltransferase G (Rhodopseudomonas palustris (strain BisA53)).